The primary structure comprises 358 residues: Feruloyl esterase B (358 aa).

Residues 1-18 (MAIPLVLLLAWLLPTVFA) form the signal peptide. Positions 19–291 (ASLTQVSNFG…VSVVLDWFGI (273 aa)) are catalytic. S136 (charge relay system) is an active-site residue. N179 and N246 each carry an N-linked (GlcNAc...) asparagine glycan. Residues 292 to 321 (TGGGGGNGGGSGSTTTTTSATTTSTGPTGG) form a gly/Thr-rich linker region. Positions 297–318 (GNGGGSGSTTTTTSATTTSTGP) are disordered. Low complexity predominate over residues 304 to 318 (STTTTTSATTTSTGP). Residues 322–358 (CTAAHWDQCGGNGYTGCTSCASPYTCQKVNDYYSQCL) form the CBM1 domain.

It belongs to the carbohydrate esterase 1 (CE1) family. Feruloyl esterase type B subfamily.

It localises to the secreted. It carries out the reaction feruloyl-polysaccharide + H2O = ferulate + polysaccharide.. In terms of biological role, involved in degradation of plant cell walls. Hydrolyzes the feruloyl-arabinose ester bond in arabinoxylans as well as the feruloyl-galactose and feruloyl-arabinose ester bonds in pectin. Active against methyl esters of caffeate (MCA), but not sinapate (MSA). The chain is Feruloyl esterase B (faeB) from Talaromyces stipitatus (strain ATCC 10500 / CBS 375.48 / QM 6759 / NRRL 1006) (Penicillium stipitatum).